A 176-amino-acid chain; its full sequence is Flavodoxin 1 (176 aa).

The Flavodoxin-like domain occupies 4–165 (TGIFFGSDTG…RVEKWVKQVS (162 aa)).

Belongs to the flavodoxin family. Requires FMN as cofactor.

Low-potential electron donor to a number of redox enzymes (Potential). Involved in the reactivation of inactive cob(II)alamin in methionine synthase. This Salmonella typhimurium (strain LT2 / SGSC1412 / ATCC 700720) protein is Flavodoxin 1 (fldA).